A 335-amino-acid polypeptide reads, in one-letter code: MKHLLSTENLSLFDAVRVLDTAEEMSAVGEREVKKLPALRGRTVVNLFFEDSTRTRISFEAAAKRLSADVINFAAKGSSVSKGESLKDTAQTLAAMGADAVVIRHWASGAPHRLAATDWIDAAVINAGDGTHEHPTQALLDAFTMRRHWSQVNGTESTGADLKGMRVAIAGDVLHSRVARSNVWLLKTLGAEVTLVAPPTLLPIGVEHWPCKVSYNLDETLEAGIDAMMMLRVQGERMNASFFPSTREYSRRWGFDDARLRMLDDLGMKDTIIMHPGPMNRGLEISSAAADSPRSTVLAQVRNGVSVRMAALYLLLSGDSREAAPNVSQSSKETN.

2 residues coordinate carbamoyl phosphate: arginine 54 and threonine 55. An L-aspartate-binding site is contributed by lysine 82. Carbamoyl phosphate-binding residues include arginine 104, histidine 134, and glutamine 137. Residues arginine 177 and arginine 232 each coordinate L-aspartate. Carbamoyl phosphate-binding residues include glycine 277 and proline 278.

The protein belongs to the aspartate/ornithine carbamoyltransferase superfamily. ATCase family. As to quaternary structure, heterododecamer (2C3:3R2) of six catalytic PyrB chains organized as two trimers (C3), and six regulatory PyrI chains organized as three dimers (R2).

It carries out the reaction carbamoyl phosphate + L-aspartate = N-carbamoyl-L-aspartate + phosphate + H(+). The protein operates within pyrimidine metabolism; UMP biosynthesis via de novo pathway; (S)-dihydroorotate from bicarbonate: step 2/3. Functionally, catalyzes the condensation of carbamoyl phosphate and aspartate to form carbamoyl aspartate and inorganic phosphate, the committed step in the de novo pyrimidine nucleotide biosynthesis pathway. In Paenarthrobacter aurescens (strain TC1), this protein is Aspartate carbamoyltransferase catalytic subunit.